The sequence spans 239 residues: Small ribosomal subunit protein uS2 (239 aa).

This sequence belongs to the universal ribosomal protein uS2 family.

The polypeptide is Small ribosomal subunit protein uS2 (Histophilus somni (strain 129Pt) (Haemophilus somnus)).